We begin with the raw amino-acid sequence, 346 residues long: MSFRTIEWRDNKVVMIDQTRLPGEEVYNVYEDFQSVAEAIRGMIIRGAPAIGVAAAMGVALGAREIIADTYESFSRQLTNVCDVLARTRPTAVNLFWAIERMKRVAESNKDRDLHFIRETLKAEAIRIEEEDLEICRAIGRHGAPLIREGATVLTHCNAGGLATAGYGTALGVIRAAHEAGKNIQVFADETRPWLQGARLTAWELMKDGIPVTLIADNMAGYFMKKGAITACVVGADRIAANGDTANKIGTYSVAVLAKENKIPFYVAAPVSTLDLSLKSGDEIPIEERHACEVTHLQGLPVAPEGVKVRNPAFDVTPAKYIAGIITEKGVVRGDYERELKALVGQ.

Substrate-binding positions include Arg-46–Ala-48, Arg-89, and Gln-196. Asp-237 acts as the Proton donor in catalysis. Asn-247–Lys-248 provides a ligand contact to substrate.

The protein belongs to the eIF-2B alpha/beta/delta subunits family. MtnA subfamily.

The catalysed reaction is 5-(methylsulfanyl)-alpha-D-ribose 1-phosphate = 5-(methylsulfanyl)-D-ribulose 1-phosphate. Its pathway is amino-acid biosynthesis; L-methionine biosynthesis via salvage pathway; L-methionine from S-methyl-5-thio-alpha-D-ribose 1-phosphate: step 1/6. Its function is as follows. Catalyzes the interconversion of methylthioribose-1-phosphate (MTR-1-P) into methylthioribulose-1-phosphate (MTRu-1-P). The protein is Methylthioribose-1-phosphate isomerase of Geotalea daltonii (strain DSM 22248 / JCM 15807 / FRC-32) (Geobacter daltonii).